Consider the following 467-residue polypeptide: UDP-N-acetylmuramoylalanine--D-glutamate ligase (467 aa).

121–127 (GTNGKST) is a binding site for ATP.

Belongs to the MurCDEF family.

The protein resides in the cytoplasm. The catalysed reaction is UDP-N-acetyl-alpha-D-muramoyl-L-alanine + D-glutamate + ATP = UDP-N-acetyl-alpha-D-muramoyl-L-alanyl-D-glutamate + ADP + phosphate + H(+). It functions in the pathway cell wall biogenesis; peptidoglycan biosynthesis. In terms of biological role, cell wall formation. Catalyzes the addition of glutamate to the nucleotide precursor UDP-N-acetylmuramoyl-L-alanine (UMA). In Brucella suis biovar 1 (strain 1330), this protein is UDP-N-acetylmuramoylalanine--D-glutamate ligase.